A 203-amino-acid chain; its full sequence is MPIGVPRVPYRLPGEPYSQWISLDDRLYQERILFIGEPIDDNLANTIVGVMLYLNSQDPQKDIVMYINSPGGSVTAGMAIYDTMNHVKPDIVTVCVGQAASMGAFLLAAGTKGKRFALPHSRIMLHQPSLGMIQGQASDIEIRARETLRVKRRMNELLAQMTGQPLEKIERDVERDFYLSATEAQAYGIVDRVIQERSEAMAG.

S101 (nucleophile) is an active-site residue. H126 is an active-site residue.

Belongs to the peptidase S14 family. In terms of assembly, fourteen ClpP subunits assemble into 2 heptameric rings which stack back to back to give a disk-like structure with a central cavity, resembling the structure of eukaryotic proteasomes.

It is found in the cytoplasm. The catalysed reaction is Hydrolysis of proteins to small peptides in the presence of ATP and magnesium. alpha-casein is the usual test substrate. In the absence of ATP, only oligopeptides shorter than five residues are hydrolyzed (such as succinyl-Leu-Tyr-|-NHMec, and Leu-Tyr-Leu-|-Tyr-Trp, in which cleavage of the -Tyr-|-Leu- and -Tyr-|-Trp bonds also occurs).. Cleaves peptides in various proteins in a process that requires ATP hydrolysis. Has a chymotrypsin-like activity. Plays a major role in the degradation of misfolded proteins. The chain is ATP-dependent Clp protease proteolytic subunit 1 from Synechococcus sp. (strain JA-3-3Ab) (Cyanobacteria bacterium Yellowstone A-Prime).